The chain runs to 485 residues: Bindin (485 aa).

The first 20 residues, 1–20 (MGFHQISVIIVVLALASARA), serve as a signal peptide directing secretion. The propeptide occupies 21-247 (ADEFPSHTDT…DSERGARKKR (227 aa)). Disordered regions lie at residues 157-195 (GETRKRRGADDNDGDDVSKRASPRKGDEPAGHKLKDLAP), 219-273 (ISGH…PAQQ), and 305-331 (GGGQFGAFSPGEAEADNADYDEYSDSL). Over residues 172–192 (DVSKRASPRKGDEPAGHKLKD) the composition is skewed to basic and acidic residues. Positions 250-264 (NQGNYPQAMNPQSRG) are enriched in polar residues. Residues 317-331 (AEADNADYDEYSDSL) are compositionally biased toward acidic residues. Residues 371–379 (LRHLRHHSN) are fucose-binding domain. The tract at residues 459 to 485 (QQGMGGVPQRMGGQPQGNAYNQGYRQG) is disordered. A compositionally biased stretch (low complexity) spans 465 to 475 (VPQRMGGQPQG). Residues 476-485 (NAYNQGYRQG) show a composition bias toward polar residues.

It belongs to the bindin family.

Its subcellular location is the cytoplasmic vesicle. The protein resides in the secretory vesicle. The protein localises to the acrosome lumen. Functionally, species-specific sea urchin sperm protein required for adhesion of sperm to the egg surface during fertilization. Bindin coats the acrosomal process after it is externalized by the acrosome reaction. It binds to sulfated, fucose-containing polysaccharides on the vitelline layer receptor proteoglycans which cover the egg plasma membrane. This Mesocentrotus franciscanus (Giant red sea urchin) protein is Bindin.